A 204-amino-acid polypeptide reads, in one-letter code: Holliday junction branch migration complex subunit RuvA (204 aa).

The interval 1-64 (MIGRVTGILV…EDAHLLFGFS (64 aa)) is domain I. A domain II region spans residues 65–143 (HKQDRSLFRE…GLQQTDFFIK (79 aa)). The interval 144 to 155 (SSHLPGIKCSKL) is flexible linker. The segment at 156–204 (DQSLQLDEAVSALIALGYKPIEAEKMVKKVLKADLTSEQLIREALKAAL) is domain III.

It belongs to the RuvA family. In terms of assembly, homotetramer. Forms an RuvA(8)-RuvB(12)-Holliday junction (HJ) complex. HJ DNA is sandwiched between 2 RuvA tetramers; dsDNA enters through RuvA and exits via RuvB. An RuvB hexamer assembles on each DNA strand where it exits the tetramer. Each RuvB hexamer is contacted by two RuvA subunits (via domain III) on 2 adjacent RuvB subunits; this complex drives branch migration. In the full resolvosome a probable DNA-RuvA(4)-RuvB(12)-RuvC(2) complex forms which resolves the HJ.

Its subcellular location is the cytoplasm. Its function is as follows. The RuvA-RuvB-RuvC complex processes Holliday junction (HJ) DNA during genetic recombination and DNA repair, while the RuvA-RuvB complex plays an important role in the rescue of blocked DNA replication forks via replication fork reversal (RFR). RuvA specifically binds to HJ cruciform DNA, conferring on it an open structure. The RuvB hexamer acts as an ATP-dependent pump, pulling dsDNA into and through the RuvAB complex. HJ branch migration allows RuvC to scan DNA until it finds its consensus sequence, where it cleaves and resolves the cruciform DNA. The chain is Holliday junction branch migration complex subunit RuvA from Histophilus somni (strain 2336) (Haemophilus somnus).